Here is a 416-residue protein sequence, read N- to C-terminus: Zinc finger protein 92 homolog (416 aa).

The 72-residue stretch at 14 to 85 folds into the KRAB domain; sequence VSFEDVSVYF…DIPRTWATAG (72 aa). The interval 86 to 125 is disordered; sequence LHIGDRTQSKTSTSTQKHSGRQLPGADPQGGKEGQAARSS. 8 consecutive C2H2-type zinc fingers follow at residues 152–174, 180–202, 208–230, 236–258, 264–286, 292–314, 320–342, and 348–370; these read YLCQ…RIIH, YACP…QRIH, YACP…QVIH, FACG…ARVH, YACP…QRTH, YACG…QRSH, FACR…RRVH, and YECS…QAVH. The tract at residues 368 to 416 is disordered; sequence AVHGARRPAKAETARRLAGPGSTGPGSAVAATSPPRPSTAARPSRPSRR. Residues 394 to 416 show a composition bias toward low complexity; that stretch reads SAVAATSPPRPSTAARPSRPSRR.

This sequence belongs to the krueppel C2H2-type zinc-finger protein family.

It localises to the nucleus. KRAB domain-containing zinc-finger protein that represses B1/Alu SINE transposable elements and modulates the transcription of nearby genes in a tissue-specific manner. It regulates glucose homeostasis and lipid metabolism by modulating the expression of the endocrine cell-defining transcription factor, MAFB, in pancreatic islets and, the fat metabolism regulator, ACACB, in adipose tissue and muscle. The sequence is that of Zinc finger protein 92 homolog (ZFP92) from Homo sapiens (Human).